Here is a 362-residue protein sequence, read N- to C-terminus: 5-amino-6-(D-ribitylamino)uracil--L-tyrosine 4-hydroxyphenyl transferase (362 aa).

Positions 48 to 294 constitute a Radical SAM core domain; the sequence is ITYVVNRNIN…GDTIKNIQVS (247 aa). [4Fe-4S] cluster contacts are provided by Cys-62, Cys-66, and Cys-69.

The protein belongs to the radical SAM superfamily. CofH family. In terms of assembly, consists of two subunits, CofG and CofH. [4Fe-4S] cluster is required as a cofactor.

The catalysed reaction is 5-amino-6-(D-ribitylamino)uracil + L-tyrosine + S-adenosyl-L-methionine = 5-amino-5-(4-hydroxybenzyl)-6-(D-ribitylimino)-5,6-dihydrouracil + 2-iminoacetate + 5'-deoxyadenosine + L-methionine + H(+). The protein operates within cofactor biosynthesis; coenzyme F0 biosynthesis. Catalyzes the radical-mediated synthesis of 5-amino-5-(4-hydroxybenzyl)-6-(D-ribitylimino)-5,6-dihydrouracil from 5-amino-6-(D-ribitylamino)uracil and L-tyrosine. This chain is 5-amino-6-(D-ribitylamino)uracil--L-tyrosine 4-hydroxyphenyl transferase, found in Methanococcus aeolicus (strain ATCC BAA-1280 / DSM 17508 / OCM 812 / Nankai-3).